The chain runs to 511 residues: 2,3-bisphosphoglycerate-independent phosphoglycerate mutase (511 aa).

Residues Asp12 and Ser62 each contribute to the Mn(2+) site. Ser62 (phosphoserine intermediate) is an active-site residue. Substrate contacts are provided by residues His123, 152–153 (RD), Arg184, Arg190, 259–262 (RADR), and Lys333. Positions 401, 405, 442, 443, and 460 each coordinate Mn(2+).

The protein belongs to the BPG-independent phosphoglycerate mutase family. As to quaternary structure, monomer. It depends on Mn(2+) as a cofactor.

It catalyses the reaction (2R)-2-phosphoglycerate = (2R)-3-phosphoglycerate. It functions in the pathway carbohydrate degradation; glycolysis; pyruvate from D-glyceraldehyde 3-phosphate: step 3/5. Catalyzes the interconversion of 2-phosphoglycerate and 3-phosphoglycerate. In Nitratidesulfovibrio vulgaris (strain ATCC 29579 / DSM 644 / CCUG 34227 / NCIMB 8303 / VKM B-1760 / Hildenborough) (Desulfovibrio vulgaris), this protein is 2,3-bisphosphoglycerate-independent phosphoglycerate mutase.